The following is a 362-amino-acid chain: MSKNIVVLPGDHAGQEIAQEAIKVLEAISEVSPEAKFNFQHHLIGGAAIDATGSPLPDDALAAAKKADAVLLGAVGGPKWGTGSVRPEQGLLKIRKELQLYANLRPCNFASESLLDLSPLKPQHAKGTDFVVVRELVGGIYFGERKEDEGDGVAWDSEKYTKPEVQRLTRMAAFLALQHNPPLPIWSLDKANVLASSRLWRKTVEETIKNEFPQLKLNHQLIDSAAMILVKSPTQLNGIVLTSNLFGDIISDEASVIPGSLGLLPSASLASLPDTNEAFGLYEPCHGSAPDLPKGKVNPIAMILSAAMMLKLSLNLSKEGEAVEKAVKQVLDSGVRTGDLGGSNSTSEVGDAIAKAVKEILA.

77–88 (GPKWGTGSVRPE) serves as a coordination point for NAD(+). Arginine 95, arginine 105, arginine 134, and aspartate 223 together coordinate substrate. Residues aspartate 223, aspartate 248, and aspartate 252 each coordinate Mg(2+). 287-298 (GSAPDLPKGKVN) serves as a coordination point for NAD(+).

It belongs to the isocitrate and isopropylmalate dehydrogenases family. As to quaternary structure, homodimer. Requires Mg(2+) as cofactor. Mn(2+) is required as a cofactor.

It is found in the cytoplasm. The enzyme catalyses (2R,3S)-3-isopropylmalate + NAD(+) = 4-methyl-2-oxopentanoate + CO2 + NADH. It functions in the pathway amino-acid biosynthesis; L-leucine biosynthesis; L-leucine from 3-methyl-2-oxobutanoate: step 3/4. Functionally, catalyzes the oxidation of 3-carboxy-2-hydroxy-4-methylpentanoate (3-isopropylmalate) to 3-carboxy-4-methyl-2-oxopentanoate. The product decarboxylates to 4-methyl-2 oxopentanoate. This Zygosaccharomyces rouxii (strain ATCC 2623 / CBS 732 / NBRC 1130 / NCYC 568 / NRRL Y-229) protein is 3-isopropylmalate dehydrogenase (LEU2).